Reading from the N-terminus, the 283-residue chain is 3-methyl-2-oxobutanoate hydroxymethyltransferase (283 aa).

Positions 46 and 85 each coordinate Mg(2+). 3-methyl-2-oxobutanoate is bound by residues 46–47 (DS), Asp85, and Lys115. Position 117 (Glu117) interacts with Mg(2+). Catalysis depends on Glu184, which acts as the Proton acceptor.

This sequence belongs to the PanB family. In terms of assembly, homodecamer; pentamer of dimers. Requires Mg(2+) as cofactor.

It localises to the cytoplasm. It catalyses the reaction 3-methyl-2-oxobutanoate + (6R)-5,10-methylene-5,6,7,8-tetrahydrofolate + H2O = 2-dehydropantoate + (6S)-5,6,7,8-tetrahydrofolate. Its pathway is cofactor biosynthesis; (R)-pantothenate biosynthesis; (R)-pantoate from 3-methyl-2-oxobutanoate: step 1/2. In terms of biological role, catalyzes the reversible reaction in which hydroxymethyl group from 5,10-methylenetetrahydrofolate is transferred onto alpha-ketoisovalerate to form ketopantoate. The protein is 3-methyl-2-oxobutanoate hydroxymethyltransferase of Acetivibrio thermocellus (strain ATCC 27405 / DSM 1237 / JCM 9322 / NBRC 103400 / NCIMB 10682 / NRRL B-4536 / VPI 7372) (Clostridium thermocellum).